A 211-amino-acid polypeptide reads, in one-letter code: Large ribosomal subunit protein uL4 (211 aa).

The disordered stretch occupies residues 52–79; sequence GRAEVHGSNSKPYSQKGTGRARRGDKKS. The segment covering 58-68 has biased composition (polar residues); it reads GSNSKPYSQKG.

Belongs to the universal ribosomal protein uL4 family. Part of the 50S ribosomal subunit.

In terms of biological role, one of the primary rRNA binding proteins, this protein initially binds near the 5'-end of the 23S rRNA. It is important during the early stages of 50S assembly. It makes multiple contacts with different domains of the 23S rRNA in the assembled 50S subunit and ribosome. Functionally, forms part of the polypeptide exit tunnel. In Treponema denticola (strain ATCC 35405 / DSM 14222 / CIP 103919 / JCM 8153 / KCTC 15104), this protein is Large ribosomal subunit protein uL4.